The primary structure comprises 126 residues: Urease subunit beta (126 aa).

It belongs to the urease beta subunit family. Heterotrimer of UreA (gamma), UreB (beta) and UreC (alpha) subunits. Three heterotrimers associate to form the active enzyme.

It is found in the cytoplasm. The catalysed reaction is urea + 2 H2O + H(+) = hydrogencarbonate + 2 NH4(+). Its pathway is nitrogen metabolism; urea degradation; CO(2) and NH(3) from urea (urease route): step 1/1. The sequence is that of Urease subunit beta from Sporosarcina pasteurii (Bacillus pasteurii).